The sequence spans 442 residues: UDP-N-acetylmuramate--L-alanine ligase (442 aa).

109 to 115 (GAHGKTS) serves as a coordination point for ATP.

It belongs to the MurCDEF family.

The protein localises to the cytoplasm. The catalysed reaction is UDP-N-acetyl-alpha-D-muramate + L-alanine + ATP = UDP-N-acetyl-alpha-D-muramoyl-L-alanine + ADP + phosphate + H(+). The protein operates within cell wall biogenesis; peptidoglycan biosynthesis. Its function is as follows. Cell wall formation. The sequence is that of UDP-N-acetylmuramate--L-alanine ligase from Streptococcus pyogenes serotype M49 (strain NZ131).